Consider the following 376-residue polypeptide: N-acetyldiaminopimelate deacetylase (376 aa).

Residue Asp-69 is part of the active site. Glu-128 functions as the Proton acceptor in the catalytic mechanism.

The protein belongs to the peptidase M20A family. N-acetyldiaminopimelate deacetylase subfamily.

It catalyses the reaction N-acetyl-(2S,6S)-2,6-diaminopimelate + H2O = (2S,6S)-2,6-diaminopimelate + acetate. It functions in the pathway amino-acid biosynthesis; L-lysine biosynthesis via DAP pathway; LL-2,6-diaminopimelate from (S)-tetrahydrodipicolinate (acetylase route): step 3/3. Its function is as follows. Catalyzes the conversion of N-acetyl-diaminopimelate to diaminopimelate and acetate. This chain is N-acetyldiaminopimelate deacetylase, found in Streptococcus pneumoniae (strain 70585).